Consider the following 437-residue polypeptide: MSIKTLISVLRVTLLTACLLPSLFFVRSAIAGPYIWEVVMYSSSGSSTPAEACEKARVVADRSPDWNYTSATPKMNGLDNSYCSVVYVSRRDPSVVNTCDDCASWKLFRKGDQCANADDTYNASTGICEPPPKECKEGELFPAKGPDSPVVTSGGRNYVGDGGAPTACYQSCEYGGNPSPASCYLVKGSTTTGFCNYILKGTGQSCGADSYTFSQTGDSLNPPDTPNTDPSDPNDPGCPPGWSWSGTTCVKTPTDPTDPTDPTTPGGDGGGDGNGGGNNNGGGNDGGTGNGDGSGGGDGNGAGDGSGDGDGSGTGGDGNGTCDPAKENCSTGPEGPGGELKEPTPGTWDDAIATWEKKVEEAKKELKTKVKANVDQMKGAFDLNLAEGGGQLPCESMTIWGKSYSLCISDYAGQLSSLRVALLLMAALIAALILLKD.

An N-terminal signal peptide occupies residues 1–31; it reads MSIKTLISVLRVTLLTACLLPSLFFVRSAIA. A disordered region spans residues 214–347; sequence SQTGDSLNPP…GELKEPTPGT (134 aa). Low complexity-rich tracts occupy residues 218-235 and 252-265; these read DSLNPPDTPNTDPSDPND and TPTDPTDPTDPTTP. The segment covering 266–319 has biased composition (gly residues); it reads GGDGGGDGNGGGNNNGGGNDGGTGNGDGSGGGDGNGAGDGSGDGDGSGTGGDGN. A helical transmembrane segment spans residues 415–435; the sequence is LSSLRVALLLMAALIAALILL.

Belongs to the inovirus G3P protein family. In terms of assembly, interacts with G6P; this interaction is required for proper integration of G3P and G6P into the virion. Interacts with G8P. Interacts with the tip of the host pilus.

The protein localises to the virion. It is found in the host membrane. In terms of biological role, plays essential roles both in the penetration of the viral genome into the bacterial host via pilus retraction and in the extrusion process. During the initial step of infection, G3P mediates adsorption of the phage to its primary receptor, the tip of host type IV PAK pilus. Attachment of the phage causes pilus retraction bringing the viral particle into close proximity of the host cell inner membrane. Subsequent interaction with a secondary host entry receptor induces penetration of the viral DNA into the host cytoplasm. In the extrusion process, G3P mediates the release of the membrane-anchored virion from the cell via its C-terminal domain. The protein is Attachment protein G3P (III) of Pseudomonas aeruginosa (Bacteriophage Pf1).